Reading from the N-terminus, the 610-residue chain is T-cell immunomodulatory protein (610 aa).

Residues 1–32 (MAAGRLPSARAVLAPLFLGLALLSVGPAPARA) form the signal peptide. Asn-35, Asn-123, Asn-138, Asn-145, Asn-150, Asn-175, and Asn-241 each carry an N-linked (GlcNAc...) asparagine glycan. The FG-GAP 1; atypical repeat unit spans residues 98–135 (LVTSVVPGDYDGDSQMDVLLTYFPQNHTNSELGAVIFW). One copy of the FG-GAP 2; atypical repeat lies at 153–183 (FHDQPLIMDFNGDLIPDVFGITNESSQPQIL). Residues 256–291 (VVGQSAFADFDGDGHMDHLLPGCEDKDCQKSAIYLM) form an FG-GAP 3; atypical repeat. Asn-351, Asn-369, and Asn-480 each carry an N-linked (GlcNAc...) asparagine glycan. Residues 565 to 585 (VLLTAVALIGVCIFILAIIAI) traverse the membrane as a helical segment.

The protein belongs to the TIP family. Interacts with RUVBL1, RUVBL2 and alpha-tubulin.

Its subcellular location is the secreted. The protein resides in the membrane. Modulator of T-cell function. Has a protective effect in graft versus host disease model. This chain is T-cell immunomodulatory protein, found in Mus musculus (Mouse).